The following is a 181-amino-acid chain: Large ribosomal subunit protein uL10 (181 aa).

Belongs to the universal ribosomal protein uL10 family. Part of the ribosomal stalk of the 50S ribosomal subunit. The N-terminus interacts with L11 and the large rRNA to form the base of the stalk. The C-terminus forms an elongated spine to which L12 dimers bind in a sequential fashion forming a multimeric L10(L12)X complex.

Functionally, forms part of the ribosomal stalk, playing a central role in the interaction of the ribosome with GTP-bound translation factors. This is Large ribosomal subunit protein uL10 from Bradyrhizobium diazoefficiens (strain JCM 10833 / BCRC 13528 / IAM 13628 / NBRC 14792 / USDA 110).